We begin with the raw amino-acid sequence, 200 residues long: MLAFCRSSLKSKKYFIILLALAAIAGLGTHAAWSSNGLPRIDNKTLARLAQQHPVVVLFRHAERCDRSTNQCLSDITGITVKGTQDARELGNAFSADIPDFDLYSSNTVRTIQSATWFSAGKKLTVDKRFLQCGNDIYSAIKDLQSKAPDKNIVIFTHNHCLTYIAKDKRDATFKPDYLNGLVMHVEKGKVYLDGEFVNH.

Residues 1–25 form the signal peptide; it reads MLAFCRSSLKSKKYFIILLALAAIA.

Belongs to the phosphoglycerate mutase family. Ais subfamily.

It is found in the periplasm. Its pathway is bacterial outer membrane biogenesis; lipopolysaccharide metabolism. Functionally, catalyzes the dephosphorylation of heptose(II) of the outer membrane lipopolysaccharide core. The protein is Lipopolysaccharide core heptose(II)-phosphate phosphatase of Escherichia coli O9:H4 (strain HS).